A 453-amino-acid polypeptide reads, in one-letter code: MSFDLIIKNGTVILENEARVVDIAVKDGKIAAIGQDLGDAKDVMDASGLVVSPGMVDAHTHISEPGRSHWEGYETGTRAAAKGGITTMIEMPLNQLPATVDRASIELKFDAAKGKLTIDAAQLGGLVSYNIDRLHELDEVGVVGFKCFVATCGDRGIDNDFRDVNDWQFFKGAQKLGELGQPVLVHCENALICDALGEEAKREGRVTAHDYVASRPVFTEVEAIRRVLYLAKVAGCRLHVCHVSSPEGVEEVTRARQEGQDVTCESCPHYFVLDTDQFEEIGTLAKCSPPIRDLENQKGMWEKLFNGEIDCLVSDHSPCPPEMKAGNIMKAWGGIAGLQSCMDVMFDEAVQKRGMSLPMFGKLMATNAADIFGLQQKGRIAPGKDADFVFIQPNSSYVLTNDDLEYRHKVSPYVGRTIGARITKTILRGDVIYDIEQGFPVAPKGQFILKHQQ.

Zn(2+) contacts are provided by His-59, His-61, Lys-146, His-186, His-242, and Asp-315. Lys-146 carries the N6-carboxylysine modification.

The protein belongs to the metallo-dependent hydrolases superfamily. Allantoinase family. As to quaternary structure, homotetramer. Zn(2+) serves as cofactor. Carboxylation allows a single lysine to coordinate two zinc ions.

It carries out the reaction (S)-allantoin + H2O = allantoate + H(+). It participates in nitrogen metabolism; (S)-allantoin degradation; allantoate from (S)-allantoin: step 1/1. Its function is as follows. Catalyzes the conversion of allantoin (5-ureidohydantoin) to allantoic acid by hydrolytic cleavage of the five-member hydantoin ring. The polypeptide is Allantoinase (Escherichia coli O127:H6 (strain E2348/69 / EPEC)).